The primary structure comprises 446 residues: Tripartite motif-containing protein 43C (446 aa).

The RING-type zinc finger occupies 16–57 (CSICQGIFMDPVYLRCGHKFCETCLLLFQEDIKFPAYCPTCR). The B box-type zinc-finger motif lies at 88 to 129 (SEEHKCVTHKAKKMIFCDKSKILLCHLCSDSQEHSGHTHCSI). Residues Cys-93, His-96, Cys-115, and His-121 each coordinate Zn(2+). The B30.2/SPRY domain maps to 271–446 (RLRAHSIPGL…VRPFFFAAYT (176 aa)).

It belongs to the TRIM/RBCC family.

The protein is Tripartite motif-containing protein 43C of Mus musculus (Mouse).